Here is a 345-residue protein sequence, read N- to C-terminus: Glycerol-3-phosphate dehydrogenase [NAD(P)+] (345 aa).

NADPH contacts are provided by S11, W12, H32, R33, and K106. Residues K106, G137, and S139 each contribute to the sn-glycerol 3-phosphate site. NADPH is bound at residue A141. Sn-glycerol 3-phosphate is bound by residues K192, D245, S255, R256, and N257. The Proton acceptor role is filled by K192. R256 provides a ligand contact to NADPH. Residues V280 and E282 each coordinate NADPH.

This sequence belongs to the NAD-dependent glycerol-3-phosphate dehydrogenase family.

The protein localises to the cytoplasm. It carries out the reaction sn-glycerol 3-phosphate + NAD(+) = dihydroxyacetone phosphate + NADH + H(+). The enzyme catalyses sn-glycerol 3-phosphate + NADP(+) = dihydroxyacetone phosphate + NADPH + H(+). The protein operates within membrane lipid metabolism; glycerophospholipid metabolism. In terms of biological role, catalyzes the reduction of the glycolytic intermediate dihydroxyacetone phosphate (DHAP) to sn-glycerol 3-phosphate (G3P), the key precursor for phospholipid synthesis. The protein is Glycerol-3-phosphate dehydrogenase [NAD(P)+] of Bacillus velezensis (strain DSM 23117 / BGSC 10A6 / LMG 26770 / FZB42) (Bacillus amyloliquefaciens subsp. plantarum).